The chain runs to 387 residues: Zinc finger protein neuro-d4 (387 aa).

Residues lysine 106, lysine 129, and lysine 133 each participate in a glycyl lysine isopeptide (Lys-Gly) (interchain with G-Cter in SUMO2) cross-link. The segment at 195-218 (YVCDICGKRYKNRPGLSYHYTHTH) adopts a C2H2-type zinc-finger fold. PHD-type zinc fingers lie at residues 271-328 (NGYC…CKSC) and 325-375 (CKSC…CLRH). The Zn(2+) site is built by cysteine 274, cysteine 277, cysteine 293, cysteine 296, histidine 301, cysteine 304, cysteine 322, cysteine 325, cysteine 328, cysteine 331, cysteine 343, cysteine 346, histidine 351, cysteine 354, cysteine 369, and cysteine 372.

This sequence belongs to the requiem/DPF family. As to quaternary structure, component of neuron-specific chromatin remodeling complex (nBAF complex) composed of at least, ARID1A/BAF250A or ARID1B/BAF250B, SMARCD1/BAF60A, SMARCD3/BAF60C, SMARCA2/BRM/BAF190B, SMARCA4/BRG1/BAF190A, SMARCB1/BAF47, SMARCC1/BAF155, SMARCE1/BAF57, SMARCC2/BAF170, DPF1/BAF45B, DPF3/BAF45C, ACTL6B/BAF53B and actin. As to expression, at embryonic stages, predominant expression in the nervous system. Expressed specifically in postmitotic neurons (at protein level).

It is found in the cytoplasm. Its subcellular location is the nucleus. Its function is as follows. May have an important role in developing neurons by participating in regulation of cell survival, possibly as a neurospecific transcription factor. Belongs to the neuron-specific chromatin remodeling complex (nBAF complex). During neural development a switch from a stem/progenitor to a postmitotic chromatin remodeling mechanism occurs as neurons exit the cell cycle and become committed to their adult state. The transition from proliferating neural stem/progenitor cells to postmitotic neurons requires a switch in subunit composition of the npBAF and nBAF complexes. As neural progenitors exit mitosis and differentiate into neurons, npBAF complexes which contain ACTL6A/BAF53A and PHF10/BAF45A, are exchanged for homologous alternative ACTL6B/BAF53B and DPF1/BAF45B or DPF3/BAF45C subunits in neuron-specific complexes (nBAF). The npBAF complex is essential for the self-renewal/proliferative capacity of the multipotent neural stem cells. The nBAF complex along with CREST plays a role regulating the activity of genes essential for dendrite growth. This Mus musculus (Mouse) protein is Zinc finger protein neuro-d4.